The chain runs to 172 residues: Shikimate kinase (172 aa).

14–19 is a binding site for ATP; it reads GAGKST. A Mg(2+)-binding site is contributed by S18. 3 residues coordinate substrate: D36, R60, and G82. R120 provides a ligand contact to ATP. R139 is a binding site for substrate. Residue Q156 coordinates ATP.

The protein belongs to the shikimate kinase family. Monomer. Requires Mg(2+) as cofactor.

Its subcellular location is the cytoplasm. It carries out the reaction shikimate + ATP = 3-phosphoshikimate + ADP + H(+). It functions in the pathway metabolic intermediate biosynthesis; chorismate biosynthesis; chorismate from D-erythrose 4-phosphate and phosphoenolpyruvate: step 5/7. In terms of biological role, catalyzes the specific phosphorylation of the 3-hydroxyl group of shikimic acid using ATP as a cosubstrate. This Aliivibrio fischeri (strain ATCC 700601 / ES114) (Vibrio fischeri) protein is Shikimate kinase.